A 160-amino-acid chain; its full sequence is Cathelin-related peptide SC5 (160 aa).

The signal sequence occupies residues methionine 1 to alanine 29. Residues glutamine 30–valine 131 constitute a propeptide that is removed on maturation. 2 disulfide bridges follow: cysteine 86/cysteine 97 and cysteine 108/cysteine 125.

Belongs to the cathelicidin family.

The protein localises to the secreted. Functionally, broad spectrum bactericidal agent. The chain is Cathelin-related peptide SC5 from Ovis aries (Sheep).